The primary structure comprises 325 residues: MTATVKDELSRLRVAKPCCRRAEMAALLRFGGGLHIVGGRIVVEAELDTGATARRLRREVAEVFGFPSTVAVLAAGGLRRSVRYIVRVERDGEQLARSTGLLDQRGRPVRGLPPQVVTGSACDAAAAWRGAFLAHGSLTEPGRSCSLEVTSPGPEAALALVGAARRLGVQAKSRDVRGVDRVVIRDGDAIGALLTKIGAHDSLMAWEERRMRREVRATANRLANFDDANLRRSARAAVAAGARVQAAMRILGDDAPEHLLAAGRLRLEHAQASLEELGALADPPLTKDAVAGRIRRLLALADKRANALGIPNTEASVSPDLLENA.

The H-T-H motif DNA-binding region spans serine 273–asparagine 306.

The protein belongs to the WhiA family.

In terms of biological role, involved in cell division and chromosome segregation. The polypeptide is Probable cell division protein WhiA (Frankia alni (strain DSM 45986 / CECT 9034 / ACN14a)).